A 101-amino-acid chain; its full sequence is Integration host factor subunit beta (101 aa).

The disordered stretch occupies residues 57–101 (PARAGRNPRTGAHVPVDQKSVPFFKTGKEMRERLNRDHPDPGAAD). Over residues 82–101 (TGKEMRERLNRDHPDPGAAD) the composition is skewed to basic and acidic residues.

Belongs to the bacterial histone-like protein family. As to quaternary structure, heterodimer of an alpha and a beta chain.

Functionally, this protein is one of the two subunits of integration host factor, a specific DNA-binding protein that functions in genetic recombination as well as in transcriptional and translational control. The protein is Integration host factor subunit beta of Bradyrhizobium diazoefficiens (strain JCM 10833 / BCRC 13528 / IAM 13628 / NBRC 14792 / USDA 110).